The chain runs to 328 residues: Tetraacyldisaccharide 4'-kinase (328 aa).

55–62 contributes to the ATP binding site; it reads TAGGNGKT.

Belongs to the LpxK family.

The catalysed reaction is a lipid A disaccharide + ATP = a lipid IVA + ADP + H(+). The protein operates within glycolipid biosynthesis; lipid IV(A) biosynthesis; lipid IV(A) from (3R)-3-hydroxytetradecanoyl-[acyl-carrier-protein] and UDP-N-acetyl-alpha-D-glucosamine: step 6/6. In terms of biological role, transfers the gamma-phosphate of ATP to the 4'-position of a tetraacyldisaccharide 1-phosphate intermediate (termed DS-1-P) to form tetraacyldisaccharide 1,4'-bis-phosphate (lipid IVA). This chain is Tetraacyldisaccharide 4'-kinase, found in Escherichia coli O7:K1 (strain IAI39 / ExPEC).